An 812-amino-acid polypeptide reads, in one-letter code: Ras guanine nucleotide exchange factor J (812 aa).

Low complexity-rich tracts occupy residues 1 to 36 (MSNPVSINNSGSISNSNLNNESLSPSRLSSSPNSKS) and 53 to 65 (LLNRSSSGNNLNN). The disordered stretch occupies residues 1–146 (MSNPVSINNS…GGSSGGLNMS (146 aa)). Positions 75–86 (SFTSNYQNIYTP) are enriched in polar residues. Over residues 87–101 (NNNSYNSSNNNNNNN) the composition is skewed to low complexity. The segment covering 131-141 (NSGGGGGGSSG) has biased composition (gly residues). Residues 214–246 (GRDTMLQLILQHLQFEGLMDSRKLLEEEARVQY) form the LisH domain. The disordered stretch occupies residues 320 to 382 (IIYVDDKEKE…NNSIGNSNSY (63 aa)). Basic and acidic residues predominate over residues 323-343 (VDDKEKEKEKEKEKEKEKDKF). The segment covering 344 to 382 (GPNSTNSLSGSGSSPNIPSGMNNNSSSIGNNSIGNSNSY) has biased composition (low complexity). Residues 409–535 (NKPQVKAASL…LSESLNAKIK (127 aa)) form the N-terminal Ras-GEF domain. The Ras-GEF domain occupies 573–804 (DEEEIARQLT…YSRSMSFEPR (232 aa)).

In terms of biological role, promotes the exchange of Ras-bound GDP by GTP. This Dictyostelium discoideum (Social amoeba) protein is Ras guanine nucleotide exchange factor J (gefJ).